A 397-amino-acid chain; its full sequence is Succinyl-diaminopimelate desuccinylase (397 aa).

Position 73 (H73) interacts with Zn(2+). The active site involves D75. Residue D106 coordinates Zn(2+). Catalysis depends on E140, which acts as the Proton acceptor. Residues E141, E169, and H366 each contribute to the Zn(2+) site.

Belongs to the peptidase M20A family. DapE subfamily. As to quaternary structure, homodimer. Requires Zn(2+) as cofactor. Co(2+) is required as a cofactor.

The enzyme catalyses N-succinyl-(2S,6S)-2,6-diaminopimelate + H2O = (2S,6S)-2,6-diaminopimelate + succinate. The protein operates within amino-acid biosynthesis; L-lysine biosynthesis via DAP pathway; LL-2,6-diaminopimelate from (S)-tetrahydrodipicolinate (succinylase route): step 3/3. Its function is as follows. Catalyzes the hydrolysis of N-succinyl-L,L-diaminopimelic acid (SDAP), forming succinate and LL-2,6-diaminopimelate (DAP), an intermediate involved in the bacterial biosynthesis of lysine and meso-diaminopimelic acid, an essential component of bacterial cell walls. The polypeptide is Succinyl-diaminopimelate desuccinylase (Rhizobium rhizogenes (strain K84 / ATCC BAA-868) (Agrobacterium radiobacter)).